The chain runs to 209 residues: Glutathione S-transferase 2 (209 aa).

One can recognise a GST N-terminal domain in the interval 1 to 81 (MLDFYYLPGS…YLCDQYGDED (81 aa)). Glutathione is bound by residues S10, 51-53 (RTI), and 65-67 (ESR). The GST C-terminal domain occupies 88–209 (DTIQRAIVNQ…SGAKEFLTYK (122 aa)).

This sequence belongs to the GST superfamily. Theta family. As to quaternary structure, homodimer.

It catalyses the reaction RX + glutathione = an S-substituted glutathione + a halide anion + H(+). Conjugation of reduced glutathione to a wide number of exogenous and endogenous hydrophobic electrophiles. The polypeptide is Glutathione S-transferase 2 (GstD2) (Anopheles gambiae (African malaria mosquito)).